Reading from the N-terminus, the 110-residue chain is UPF0122 protein BCAH187_A3894 (110 aa).

Belongs to the UPF0122 family.

Functionally, might take part in the signal recognition particle (SRP) pathway. This is inferred from the conservation of its genetic proximity to ftsY/ffh. May be a regulatory protein. In Bacillus cereus (strain AH187), this protein is UPF0122 protein BCAH187_A3894.